Reading from the N-terminus, the 459-residue chain is Putrescine aminotransferase (459 aa).

Residues glycine 150–threonine 151 and glutamine 274 contribute to the pyridoxal 5'-phosphate site. Position 300 is an N6-(pyridoxal phosphate)lysine (lysine 300). Threonine 332 contacts pyridoxal 5'-phosphate.

The protein belongs to the class-III pyridoxal-phosphate-dependent aminotransferase family. Putrescine aminotransferase subfamily. Requires pyridoxal 5'-phosphate as cofactor.

It catalyses the reaction an alkane-alpha,omega-diamine + 2-oxoglutarate = an omega-aminoaldehyde + L-glutamate. It carries out the reaction putrescine + 2-oxoglutarate = 1-pyrroline + L-glutamate + H2O. The catalysed reaction is cadaverine + 2-oxoglutarate = 5-aminopentanal + L-glutamate. The protein operates within amine and polyamine degradation; putrescine degradation; 4-aminobutanal from putrescine (transaminase route): step 1/1. Its function is as follows. Catalyzes the aminotransferase reaction from putrescine to 2-oxoglutarate, leading to glutamate and 4-aminobutanal, which spontaneously cyclizes to form 1-pyrroline. This is the first step in one of two pathways for putrescine degradation, where putrescine is converted into 4-aminobutanoate (gamma-aminobutyrate or GABA) via 4-aminobutanal. Also functions as a cadaverine transaminase in a a L-lysine degradation pathway to succinate that proceeds via cadaverine, glutarate and L-2-hydroxyglutarate. This Escherichia coli O17:K52:H18 (strain UMN026 / ExPEC) protein is Putrescine aminotransferase.